A 543-amino-acid chain; its full sequence is Ipecac alkaloid beta-glucosidase 2 (543 aa).

Residues glutamine 36, histidine 140, 185-186 (NE), tyrosine 350, glutamate 422, tryptophan 471, and phenylalanine 487 contribute to the a beta-D-glucoside site. Catalysis depends on glutamate 186, which acts as the Proton donor. Catalysis depends on glutamate 422, which acts as the Nucleophile.

Belongs to the glycosyl hydrolase 1 family.

It localises to the cytoplasm. It is found in the cytosol. The catalysed reaction is deacetylipecoside + H2O = deacetylipecoside aglycone + D-glucose. It carries out the reaction deacetylisoipecoside + H2O = deacetylisoipecoside aglycone + D-glucose. Its pathway is alkaloid biosynthesis. Beta-glucosidase catalyzing deglucosylation on N-deacetylisoipecoside and N-deacetylipecoside. The protein is Ipecac alkaloid beta-glucosidase 2 of Carapichea ipecacuanha (Ipecac).